A 156-amino-acid chain; its full sequence is Small ribosomal subunit protein uS7 (156 aa).

Belongs to the universal ribosomal protein uS7 family. Part of the 30S ribosomal subunit. Contacts proteins S9 and S11.

Functionally, one of the primary rRNA binding proteins, it binds directly to 16S rRNA where it nucleates assembly of the head domain of the 30S subunit. Is located at the subunit interface close to the decoding center, probably blocks exit of the E-site tRNA. The polypeptide is Small ribosomal subunit protein uS7 (Macrococcus caseolyticus (strain JCSC5402) (Macrococcoides caseolyticum)).